Here is a 108-residue protein sequence, read N- to C-terminus: Thiosulfate sulfurtransferase GlpE (108 aa).

The 89-residue stretch at Gln18–Leu106 folds into the Rhodanese domain. Cys66 acts as the Cysteine persulfide intermediate in catalysis.

The protein belongs to the GlpE family.

The protein localises to the cytoplasm. The enzyme catalyses thiosulfate + hydrogen cyanide = thiocyanate + sulfite + 2 H(+). It catalyses the reaction thiosulfate + [thioredoxin]-dithiol = [thioredoxin]-disulfide + hydrogen sulfide + sulfite + 2 H(+). In terms of biological role, transferase that catalyzes the transfer of sulfur from thiosulfate to thiophilic acceptors such as cyanide or dithiols. May function in a CysM-independent thiosulfate assimilation pathway by catalyzing the conversion of thiosulfate to sulfite, which can then be used for L-cysteine biosynthesis. This Glaesserella parasuis serovar 5 (strain SH0165) (Haemophilus parasuis) protein is Thiosulfate sulfurtransferase GlpE.